A 191-amino-acid chain; its full sequence is Xanthine phosphoribosyltransferase (191 aa).

The xanthine site is built by L20 and N27. 5-phospho-alpha-D-ribose 1-diphosphate is bound at residue 128 to 132 (ANGQA). Position 156 (K156) interacts with xanthine.

This sequence belongs to the purine/pyrimidine phosphoribosyltransferase family. Xpt subfamily. In terms of assembly, homodimer.

The protein resides in the cytoplasm. It carries out the reaction XMP + diphosphate = xanthine + 5-phospho-alpha-D-ribose 1-diphosphate. It participates in purine metabolism; XMP biosynthesis via salvage pathway; XMP from xanthine: step 1/1. Functionally, converts the preformed base xanthine, a product of nucleic acid breakdown, to xanthosine 5'-monophosphate (XMP), so it can be reused for RNA or DNA synthesis. In Acinetobacter baylyi (strain ATCC 33305 / BD413 / ADP1), this protein is Xanthine phosphoribosyltransferase.